We begin with the raw amino-acid sequence, 168 residues long: Nicotinamide-nucleotide adenylyltransferase (168 aa).

This sequence belongs to the archaeal NMN adenylyltransferase family.

Its subcellular location is the cytoplasm. It carries out the reaction beta-nicotinamide D-ribonucleotide + ATP + H(+) = diphosphate + NAD(+). It functions in the pathway cofactor biosynthesis; NAD(+) biosynthesis; NAD(+) from nicotinamide D-ribonucleotide: step 1/1. The polypeptide is Nicotinamide-nucleotide adenylyltransferase (Methanosphaerula palustris (strain ATCC BAA-1556 / DSM 19958 / E1-9c)).